We begin with the raw amino-acid sequence, 713 residues long: Phenylalanine--tRNA ligase beta subunit (713 aa).

A tRNA-binding domain is found at 39-153 (IRHVENIKYG…EANLNEDPIA (115 aa)). A B5 domain is found at 379 to 454 (LKPKEILFDH…RFYGYDNFPI (76 aa)). Mg(2+) is bound by residues Asp-432, Asp-438, Glu-441, and Glu-442.

This sequence belongs to the phenylalanyl-tRNA synthetase beta subunit family. Type 1 subfamily. As to quaternary structure, tetramer of two alpha and two beta subunits. Mg(2+) serves as cofactor.

It localises to the cytoplasm. It carries out the reaction tRNA(Phe) + L-phenylalanine + ATP = L-phenylalanyl-tRNA(Phe) + AMP + diphosphate + H(+). The polypeptide is Phenylalanine--tRNA ligase beta subunit (Mycoplasma mobile (strain ATCC 43663 / 163K / NCTC 11711) (Mesomycoplasma mobile)).